The following is a 303-amino-acid chain: Probable cell division protein WhiA (303 aa).

Residues 272-303 (SIQQLADSLSTPLTKSGVNHRLRKINKIADEL) constitute a DNA-binding region (H-T-H motif).

This sequence belongs to the WhiA family.

Functionally, involved in cell division and chromosome segregation. The polypeptide is Probable cell division protein WhiA (Streptococcus pneumoniae (strain Hungary19A-6)).